We begin with the raw amino-acid sequence, 45 residues long: Large ribosomal subunit protein bL36 (45 aa).

The disordered stretch occupies residues 26–45; that stretch reads VINKKDPNRKQRQKGPARKK. A compositionally biased stretch (basic residues) spans 35-45; sequence KQRQKGPARKK.

This sequence belongs to the bacterial ribosomal protein bL36 family.

The sequence is that of Large ribosomal subunit protein bL36 from Protochlamydia amoebophila (strain UWE25).